The chain runs to 159 residues: Nucleotide-binding protein PST_3153 (159 aa).

The protein belongs to the YajQ family.

In terms of biological role, nucleotide-binding protein. This is Nucleotide-binding protein PST_3153 from Stutzerimonas stutzeri (strain A1501) (Pseudomonas stutzeri).